Reading from the N-terminus, the 1538-residue chain is MMRTAFSRISGMTAQQRTSLADEFDRVSRIAVAEPVAVVGIGCRFPGDVDGPESFWDFLVAGRNAISTVPADRWDAEAFYHPDPLTPGRMTTKWGGFVPDVAGFDAEFFGITPREAAAMDPQQRMLLEVAWEALEHAGIPPDSLGGTRTAVMMGVYFNEYQSMLAASPQNVDAYSGTGNAHSITVGRISYLLGLRGPAVAVDTACSSSLVAVHLACQSLRLRETDLALAGGVSITLRPETQIAISAWGLLSPQGRCAAFDAAADGFVRGEGAGVVVLKRLTDAVRDGDQVLAVVRGSAVNQDGRSNGVTAPNTAAQCDVIADALRSGDVAPDSVNYVEAHGTGTVLGDPIEFEALAATYGHGGDACALGAVKTNIGHLEAAAGIAGFIKATLAVQRATIPPNLHFSQWNPAIDAASTRFFVPTQNSPWPTAEGPRRAAVSSFGLGGTNAHVIIEQGSELAPVSEGGEDTGVSTLVVTGKTAQRMAATAQVLADWMEGPGAEVAVADVAHTVNHHRARQATFGTVVARDRAQAIAGLRALAAGQHAPGVVSHQDGSPGPGTVFVYSGRGSQWAGMGRQLLADEPAFAAAVAELEPVFVEQAGFSLRDVIATGKELVGIEQIQLGLIGMQLTLTELWRSYGVQPDLVIGHSMGEVAAAVVAGALTPAEGLRVTATRARLMAPLSGQGGMALLGLDAAATEALIADYPQVTVGIYNSPRQTVIAGPTEQIDELIARVRAQNRFASRVNIEVAPHNPAMDALQPAMRSELADLTPRTPTIGIISTTYADLHTQPIFDAEHWATNMRNPVRFQQAIASAGSGADGAYHTFIEISAHPLLTQAIADTLEDAHRPTKSAAKYLSIGTLQRDADDTVTFRTNLYTADIAHPPHTCHPPEPHPTIPTTPWQHTHHWIATTHPSTAAPEDPGSNKVVVNGQSTSESRALEDWCHQLAWPIRPAVSADPPSTAAWLVVADNELCHELARAADSRVDSLSPPALAAGSDPAALLDALRGVDNVLYAPPVPGELLDIESAYQVFHATRRLAAAMVASSATAISPPKLFIMTRNAQPISEGDRANPGHAVLWGLGRSLALEHPEIWGGIIDLDDSMPAELAVRHVLTAAHGTDGEDQVVYRSGARHVPRLQRRTLPGKPVTLNADASQLVIGATGNIGPHLIRQLARMGAKTIVAMARKPGALDELTQCLAATGTDLIAVAADATDPAAMQTLFDRFGTELPPLEGIYLAAFAGRPALLSEMTDDDVTTMFRPKLDALALLHRRSLKSPVRHFVLFSSVSGLLGSRWLAHYTATSAFLDSFAGARRTMGLPATVVDWGLWKSLADVQKDATQISAESGLQPMADEVAIGALPLVMNPDAAVATVVVAADWPLLAAAYRTRGALRIVDDLLPAPEDVGKGESEFRTSLRSCPAEKRRDMLFDHVGALAATVMGMPPTEPLDPSAGFFQLGMDSLMSVTLQRALSESLGEFLPASVVFDYPTVYSLTDYLATVLPELLEIGATAVATQQATDSYHELTEAELLEQLSERLRGTQ.

Residues 33–455 (AEPVAVVGIG…GTNAHVIIEQ (423 aa)) form the Ketosynthase family 3 (KS3) domain. Residues cysteine 205, histidine 340, and histidine 377 each act as for beta-ketoacyl synthase activity in the active site. The segment at 553 to 882 (DGSPGPGTVF…TNLYTADIAH (330 aa)) is acyltransferase. Serine 649 (for malonyltransferase activity) is an active-site residue. An NADP(+)-binding site is contributed by 1153–1196 (SQLVIGATGNIGPHLIRQLARMGAKTIVAMARKPGALDELTQCL). Residues 1153–1328 (SQLVIGATGN…TVVDWGLWKS (176 aa)) are beta-ketoacyl reductase. In terms of domain architecture, Carrier spans 1423 to 1498 (DMLFDHVGAL…SLTDYLATVL (76 aa)). Serine 1458 is modified (O-(pantetheine 4'-phosphoryl)serine).

The cofactor is NADP(+). Requires pantetheine 4'-phosphate as cofactor.

It catalyses the reaction icosanoyl-[(phenol)carboxyphthiodiolenone synthase] + 2 (S)-methylmalonyl-CoA + 3 malonyl-CoA + 5 NADPH + 10 H(+) = C32-carboxyphthiodiolenone-[(phenol)carboxyphthiodiolenone synthase] + 5 CO2 + 5 NADP(+) + 5 CoA + 2 H2O. The catalysed reaction is docosanoyl-[(phenol)carboxyphthiodiolenone synthase] + 2 (S)-methylmalonyl-CoA + 3 malonyl-CoA + 5 NADPH + 10 H(+) = C34-carboxyphthiodiolenone-[(phenol)carboxyphthiodiolenone synthase] + 5 CO2 + 5 NADP(+) + 5 CoA + 2 H2O. The enzyme catalyses 17-(4-hydroxyphenyl)heptadecanoyl-[(phenol)carboxyphthiodiolenone synthase] + 2 (S)-methylmalonyl-CoA + 3 malonyl-CoA + 5 NADPH + 10 H(+) = C35-(phenol)carboxyphthiodiolenone-[(phenol)carboxyphthiodiolenone synthase] + 5 CO2 + 5 NADP(+) + 5 CoA + 2 H2O. It carries out the reaction 19-(4-hydroxyphenyl)nonadecanoyl-[(phenol)carboxyphthiodiolenone synthase] + 2 (S)-methylmalonyl-CoA + 3 malonyl-CoA + 5 NADPH + 10 H(+) = C37-(phenol)carboxyphthiodiolenone-[(phenol)carboxyphthiodiolenone synthase] + 5 CO2 + 5 NADP(+) + 5 CoA + 2 H2O. It participates in lipid metabolism; fatty acid biosynthesis. Its function is as follows. Part of the PpsABCDE complex involved in the biosynthesis of the lipid core common to phthiocerols and phenolphthiocerols by successive additions of malonyl-CoA or methylmalonyl-CoA extender units. PpsA can accept as substrate the activated forms of either icosanoyl (C20), docosanoyl (C22) or lignoceroyl (C24) groups from FadD26, or a (4-hydroxyphenyl)-C17 or (4-hydroxyphenyl)-C19 fatty acyl from FadD29. PpsA initiates the biosynthesis and extends its substrate using a malonyl-CoA extender unit. The PpsB and PpsC proteins add the second and third malonyl-CoA extender units. PpsD adds an (R)-methylmalonyl unit and PpsE adds a second (R)-methylmalonyl unit. The incorporation of the methylmalonyl units results in formation of two branched methyl groups in the elongated product. This is Phenolphthiocerol/phthiocerol polyketide synthase subunit B (ppsB) from Mycobacterium tuberculosis (strain CDC 1551 / Oshkosh).